The chain runs to 515 residues: Cytochrome P450 2D7 (515 aa).

Topologically, residues 1–2 are extracellular; the sequence is MG. Residues 3–23 traverse the membrane as a helical segment; that stretch reads LEALVPLAMIVAIFLLLVDLM. The Cytoplasmic segment spans residues 24–301; it reads HRHQRWAARY…DENLRIVVGN (278 aa). The helical transmembrane segment at 302 to 322 threads the bilayer; sequence LFLAGMVTTSTTLAWGLLLMI. The Extracellular segment spans residues 323 to 515; sequence LHLDVQRGRR…SPYELCAVPR (193 aa). N416 carries an N-linked (GlcNAc...) asparagine glycan. C461 is a heme binding site.

The protein belongs to the cytochrome P450 family. The cofactor is heme. Expressed in brain cortex (at protein level).

The protein resides in the membrane. Its subcellular location is the cytoplasm. The protein localises to the mitochondrion. The catalysed reaction is an organic molecule + reduced [NADPH--hemoprotein reductase] + O2 = an alcohol + oxidized [NADPH--hemoprotein reductase] + H2O + H(+). May be responsible for the metabolism of many drugs and environmental chemicals that it oxidizes. It may be involved in the metabolism of codeine to morphine. However, another study could not confirm it. This chain is Cytochrome P450 2D7, found in Homo sapiens (Human).